The primary structure comprises 269 residues: Aquaporin-7 (269 aa).

Residues 1–20 (MAGSVLENIQSVLQKTWVRE) lie on the Cytoplasmic side of the membrane. At S4 the chain carries Phosphoserine. Residues 21-38 (FLAEFLSTYVLMVFGLGS) traverse the membrane as a helical segment. Residues 39-51 (VAHMVLGERLGSY) are Extracellular-facing. The chain crosses the membrane as a helical span at residues 52-69 (LGVNLGFGFGVTMGIHVA). The Cytoplasmic segment spans residues 70-73 (GGIS). The segment at residues 74–87 (GAHMNAAVTFTNCA) is an intramembrane region (discontinuously helical). An NPA 1 motif is present at residues 78–80 (NAA). The Cytoplasmic segment spans residues 88–95 (LGRMAWKK). A helical transmembrane segment spans residues 96 to 116 (FPIYVLGQFLGSFLAAATTYL). Over 117-151 (IFYGAINHYAGGELLVTGPKSTANIFATYLPEHMT) the chain is Extracellular. The chain crosses the membrane as a helical span at residues 152–172 (LWRGFVDEVFVTGMLQLCIFA). Residues 173–184 (ITDKLNSPALQG) are Cytoplasmic-facing. A helical membrane pass occupies residues 185–201 (TEPLMIGILVCVLGVSL). At 202 to 205 (GMNT) the chain is on the extracellular side. Residues 206 to 219 (GYAINPSRDLPPRF) constitute an intramembrane region (discontinuously helical). The NPA 2 motif lies at 210 to 212 (NPS). Residues 220-237 (FTFIAGWGKKVFSAGNNW) lie on the Extracellular side of the membrane. Residues 238 to 259 (WWVPVVAPLLGAYLGGIVYLGL) traverse the membrane as a helical segment. Over 260-269 (IHAGIPPQGS) the chain is Cytoplasmic.

Belongs to the MIP/aquaporin (TC 1.A.8) family. Homotetramer; each monomer provides an independent glycerol/water pore. Two homotetramers on opposing membranes can dimerize, forming a cell-cell junction. Interacts with PLIN1. Phosphorylation by PKA could prevent the interaction with PLIN1. Detected in heart, kidney and testis.

It localises to the cell membrane. The protein localises to the cytoplasmic vesicle membrane. It is found in the lipid droplet. It catalyses the reaction glycerol(in) = glycerol(out). The catalysed reaction is H2O(in) = H2O(out). The enzyme catalyses urea(in) = urea(out). Glycerol transport is regulated by pH, with the porin being permeable to glycerol at pH 7.4 but not at pH 5.5. Water permeability, however, is not influenced by pH. Not inhibited by mercury ions. Aquaglyceroporins form homotetrameric transmembrane channels, with each monomer independently mediating glycerol and water transport across the plasma membrane along their osmotic gradient. Could also be permeable to urea. Mediates the efflux of glycerol, formed upon triglyceride hydrolysis, to avoid its accumulation in adipocytes and to make it available to other tissues. In the kidney, mediates the reabsorption of glycerol, preventing its loss in urine, again participating to energy homeostasis. In pancreatic beta cells, it also mediates the efflux of glycerol, regulating its intracellular levels. The polypeptide is Aquaporin-7 (Rattus norvegicus (Rat)).